The primary structure comprises 160 residues: SsrA-binding protein (160 aa).

It belongs to the SmpB family.

The protein resides in the cytoplasm. Required for rescue of stalled ribosomes mediated by trans-translation. Binds to transfer-messenger RNA (tmRNA), required for stable association of tmRNA with ribosomes. tmRNA and SmpB together mimic tRNA shape, replacing the anticodon stem-loop with SmpB. tmRNA is encoded by the ssrA gene; the 2 termini fold to resemble tRNA(Ala) and it encodes a 'tag peptide', a short internal open reading frame. During trans-translation Ala-aminoacylated tmRNA acts like a tRNA, entering the A-site of stalled ribosomes, displacing the stalled mRNA. The ribosome then switches to translate the ORF on the tmRNA; the nascent peptide is terminated with the 'tag peptide' encoded by the tmRNA and targeted for degradation. The ribosome is freed to recommence translation, which seems to be the essential function of trans-translation. This chain is SsrA-binding protein, found in Chloroflexus aurantiacus (strain ATCC 29364 / DSM 637 / Y-400-fl).